A 252-amino-acid chain; its full sequence is Aspartate/glutamate leucyltransferase (252 aa).

The protein belongs to the R-transferase family. Bpt subfamily.

Its subcellular location is the cytoplasm. The catalysed reaction is N-terminal L-glutamyl-[protein] + L-leucyl-tRNA(Leu) = N-terminal L-leucyl-L-glutamyl-[protein] + tRNA(Leu) + H(+). The enzyme catalyses N-terminal L-aspartyl-[protein] + L-leucyl-tRNA(Leu) = N-terminal L-leucyl-L-aspartyl-[protein] + tRNA(Leu) + H(+). Functionally, functions in the N-end rule pathway of protein degradation where it conjugates Leu from its aminoacyl-tRNA to the N-termini of proteins containing an N-terminal aspartate or glutamate. The polypeptide is Aspartate/glutamate leucyltransferase (Polynucleobacter necessarius subsp. necessarius (strain STIR1)).